Consider the following 346-residue polypeptide: MARPGQRWLGKWLVAMVVWALCRLATPLAKNLEPVSWSSLNPKFLSGKGLVIYPKIGDKLDIICPRAEAGRPYEYYKLYLVRPEQAAACSTVLDPNVLVTCNRPEQEIRFTIKFQEFSPNYMGLEFKKHHDYYITSTSNGSLEGLENREGGVCRTRTMKIIMKVGQDPNAVTPEQLTTSRPSKEADNTVKMATQAPGSRGSLGDSDGKHETVNQEEKSGPGASGGSSGDPDGFFNSKVALFAAVGAGCVIFLLIIIFLTVLLLKLRKRHRKHTQQRAAALSLSTLASPKGGSGTAGTEPSDIIIPLRTTENNYCPHYEKVSGDYGHPVYIVQEMPPQSPANIYYKV.

An N-terminal signal peptide occupies residues 1-27; it reads MARPGQRWLGKWLVAMVVWALCRLATP. The Extracellular segment spans residues 28–237; it reads LAKNLEPVSW…GDPDGFFNSK (210 aa). One can recognise an Ephrin RBD domain in the interval 30–164; sequence KNLEPVSWSS…TRTMKIIMKV (135 aa). Cystine bridges form between cysteine 64-cysteine 101 and cysteine 89-cysteine 153. N-linked (GlcNAc...) asparagine glycosylation is present at asparagine 139. Residues 169 to 228 are disordered; sequence NAVTPEQLTTSRPSKEADNTVKMATQAPGSRGSLGDSDGKHETVNQEEKSGPGASGGSSG. The span at 205-218 shows a compositional bias: basic and acidic residues; sequence SDGKHETVNQEEKS. A helical membrane pass occupies residues 238–258; it reads VALFAAVGAGCVIFLLIIIFL. Residues 259 to 346 are Cytoplasmic-facing; the sequence is TVLLLKLRKR…QSPANIYYKV (88 aa). The Nuclear localization signal signature appears at 260–273; sequence VLLLKLRKRHRKHT. The interval 263–294 is interaction with ZHX2; the sequence is LKLRKRHRKHTQQRAAALSLSTLASPKGGSGT. Serine 281 and serine 287 each carry phosphoserine. The short motif at 344–346 is the PDZ-binding element; the sequence is YKV.

It belongs to the ephrin family. As to quaternary structure, interacts (via PDZ-binding motif) with GRIP1 and GRIP2 (via PDZ domain 6). Interacts with TLE1. The intracellular domain peptide interacts with ZHX2; the interaction enhances ZHX2 transcriptional repression activity. Post-translationally, inducible phosphorylation of tyrosine residues in the cytoplasmic domain. In terms of processing, proteolytically processed. The ectodomain is cleaved, probably by a metalloprotease, to produce a membrane-tethered C-terminal fragment. This fragment is then further processed by the gamma-secretase complex to yield a soluble intracellular domain peptide which can translocate to the nucleus. The intracellular domain peptide is highly labile suggesting that it is targeted for degradation by the proteasome. As to expression, widely expressed. Detected in both neuronal and non-neuronal tissues. Seems to have particularly strong expression in retina, sciatic nerve, heart and spinal cord.

It localises to the cell membrane. It is found in the membrane raft. The protein resides in the nucleus. Cell surface transmembrane ligand for Eph receptors, a family of receptor tyrosine kinases which are crucial for migration, repulsion and adhesion during neuronal, vascular and epithelial development. Binding to Eph receptors residing on adjacent cells leads to contact-dependent bidirectional signaling into neighboring cells. Shows high affinity for the receptor tyrosine kinase EPHB1/ELK. Can also bind EPHB2 and EPHB3. Binds to, and induces collapse of, commissural axons/growth cones in vitro. May play a role in constraining the orientation of longitudinally projecting axons. The chain is Ephrin-B1 (EFNB1) from Homo sapiens (Human).